Reading from the N-terminus, the 492-residue chain is Glutamyl-tRNA(Gln) amidotransferase subunit A (492 aa).

Catalysis depends on charge relay system residues Lys-77 and Ser-152. Catalysis depends on Ser-176, which acts as the Acyl-ester intermediate.

Belongs to the amidase family. GatA subfamily. As to quaternary structure, heterotrimer of A, B and C subunits.

The catalysed reaction is L-glutamyl-tRNA(Gln) + L-glutamine + ATP + H2O = L-glutaminyl-tRNA(Gln) + L-glutamate + ADP + phosphate + H(+). Allows the formation of correctly charged Gln-tRNA(Gln) through the transamidation of misacylated Glu-tRNA(Gln) in organisms which lack glutaminyl-tRNA synthetase. The reaction takes place in the presence of glutamine and ATP through an activated gamma-phospho-Glu-tRNA(Gln). This is Glutamyl-tRNA(Gln) amidotransferase subunit A (gatA) from Chlamydia pneumoniae (Chlamydophila pneumoniae).